The primary structure comprises 244 residues: 5-oxoprolinase subunit A (244 aa).

This sequence belongs to the LamB/PxpA family. In terms of assembly, forms a complex composed of PxpA, PxpB and PxpC.

It catalyses the reaction 5-oxo-L-proline + ATP + 2 H2O = L-glutamate + ADP + phosphate + H(+). Catalyzes the cleavage of 5-oxoproline to form L-glutamate coupled to the hydrolysis of ATP to ADP and inorganic phosphate. The sequence is that of 5-oxoprolinase subunit A from Salmonella schwarzengrund (strain CVM19633).